We begin with the raw amino-acid sequence, 543 residues long: Light-independent protochlorophyllide reductase subunit B (543 aa).

D36 contacts [4Fe-4S] cluster. D287 acts as the Proton donor in catalysis. Residue 422–423 (GL) participates in substrate binding.

This sequence belongs to the ChlB/BchB/BchZ family. As to quaternary structure, protochlorophyllide reductase is composed of three subunits; BchL, BchN and BchB. Forms a heterotetramer of two BchB and two BchN subunits. It depends on [4Fe-4S] cluster as a cofactor.

It carries out the reaction chlorophyllide a + oxidized 2[4Fe-4S]-[ferredoxin] + 2 ADP + 2 phosphate = protochlorophyllide a + reduced 2[4Fe-4S]-[ferredoxin] + 2 ATP + 2 H2O. It participates in porphyrin-containing compound metabolism; bacteriochlorophyll biosynthesis (light-independent). Component of the dark-operative protochlorophyllide reductase (DPOR) that uses Mg-ATP and reduced ferredoxin to reduce ring D of protochlorophyllide (Pchlide) to form chlorophyllide a (Chlide). This reaction is light-independent. The NB-protein (BchN-BchB) is the catalytic component of the complex. This chain is Light-independent protochlorophyllide reductase subunit B, found in Rubrivivax gelatinosus (strain NBRC 100245 / IL144).